Consider the following 124-residue polypeptide: Small ribosomal subunit protein uS13 (124 aa).

The disordered stretch occupies residues 94-124; the sequence is GLPLRGQRTKNNSRTRKGRRKTVANKKKATK. Positions 100-124 are enriched in basic residues; it reads QRTKNNSRTRKGRRKTVANKKKATK.

The protein belongs to the universal ribosomal protein uS13 family. In terms of assembly, part of the 30S ribosomal subunit. Forms a loose heterodimer with protein S19. Forms two bridges to the 50S subunit in the 70S ribosome.

Functionally, located at the top of the head of the 30S subunit, it contacts several helices of the 16S rRNA. In the 70S ribosome it contacts the 23S rRNA (bridge B1a) and protein L5 of the 50S subunit (bridge B1b), connecting the 2 subunits; these bridges are implicated in subunit movement. Contacts the tRNAs in the A and P-sites. This chain is Small ribosomal subunit protein uS13, found in Christiangramia forsetii (strain DSM 17595 / CGMCC 1.15422 / KT0803) (Gramella forsetii).